The chain runs to 471 residues: BPI fold-containing family B member 1 (471 aa).

Positions 1–18 (MTNPWIVSLLLGATLVQA) are cleaved as a signal peptide. 4 N-linked (GlcNAc...) asparagine glycosylation sites follow: N150, N157, N260, and N397. A disulfide bond links C154 and C197.

The protein belongs to the BPI/LBP/Plunc superfamily. Plunc family.

The protein localises to the secreted. Functionally, may play a role in innate immunity in mouth, nose and lungs. Binds bacterial lipopolysaccharide (LPS) and modulates the cellular responses to LPS. The polypeptide is BPI fold-containing family B member 1 (Bpifb1) (Rattus norvegicus (Rat)).